The following is a 412-amino-acid chain: Light-independent protochlorophyllide reductase subunit N (412 aa).

[4Fe-4S] cluster-binding residues include Cys17, Cys42, and Cys103.

Belongs to the BchN/ChlN family. In terms of assembly, protochlorophyllide reductase is composed of three subunits; ChlL, ChlN and ChlB. Forms a heterotetramer of two ChlB and two ChlN subunits. [4Fe-4S] cluster is required as a cofactor.

It carries out the reaction chlorophyllide a + oxidized 2[4Fe-4S]-[ferredoxin] + 2 ADP + 2 phosphate = protochlorophyllide a + reduced 2[4Fe-4S]-[ferredoxin] + 2 ATP + 2 H2O. It participates in porphyrin-containing compound metabolism; chlorophyll biosynthesis (light-independent). Its function is as follows. Component of the dark-operative protochlorophyllide reductase (DPOR) that uses Mg-ATP and reduced ferredoxin to reduce ring D of protochlorophyllide (Pchlide) to form chlorophyllide a (Chlide). This reaction is light-independent. The NB-protein (ChlN-ChlB) is the catalytic component of the complex. The sequence is that of Light-independent protochlorophyllide reductase subunit N from Synechococcus sp. (strain CC9902).